The sequence spans 485 residues: Bcl-2-like protein 13 (485 aa).

Residues 14–30 (ETKYVVLSYLGLLSQEK) carry the BH4 motif. Serine 38 is subject to Phosphoserine. Residues 100-116 (MEDCLAHLGEKVSQELK) carry the BH3 motif. Residues 147-157 (ASGWNKILVPL) carry the BH1 motif. Residues 193–206 (YIIQQGGWGTVFSL) carry the BH2 motif. Residues 218–248 (AEDSNDIYILPSDNSGQVSPPESPTVTTSWQ) form a disordered region. The span at 229-248 (SDNSGQVSPPESPTVTTSWQ) shows a compositional bias: polar residues. An A repeat occupies 246-256 (SWQSESLPVSL). Serine 259, serine 261, serine 303, serine 326, serine 371, serine 375, serine 410, serine 420, serine 426, serine 429, and serine 444 each carry phosphoserine. An A; approximate repeat occupies 261–271 (SWHTESLPVSL). The segment at 418–451 (EESLVEELSPASEKKPVPPSEGKSRLSPAGEMKP) is disordered. One copy of the B repeat lies at 425–441 (LSPASEKKPVPPSEGKS). The B; approximate repeat unit spans residues 443-459 (LSPAGEMKPMPLSEGKS). The chain crosses the membrane as a helical span at residues 460–480 (ILLFGGAAAVAILAVAIGVAL).

It belongs to the Bcl-2 family. Monomer. Ubiquitous, with the highest levels of expression in heart, placenta and pancreas.

Its subcellular location is the mitochondrion membrane. The protein localises to the nucleus. May promote the activation of caspase-3 and apoptosis. This Homo sapiens (Human) protein is Bcl-2-like protein 13 (BCL2L13).